Here is a 378-residue protein sequence, read N- to C-terminus: MAKKDYYQILGIPKSAEEREIKKAYKRLAMKYHPDRNQGDKNAENKFKEIKEAYEILINEEKRTAYDQYGHAAFENGYNQNNTYSTFTSSTDFGDIFGDVFGDIFGGSRNQRVKKGADLCYNMEISLEEAVKGTTKEIRIPTFQKCKTCYGMGTSTGTKPNGCSTCHGKGQIHIRKGFFTVQQSCPTCNGIGTVIKNPCRMCRGQGRIKTNKTLSVKIPPGIDTNDKIRLSKEGEAGTNGAQPGDLYVQMKVNKHPIFEREENNLYCEVPINFTMAALGGEIEVPTLDGRVNLKIPSETQSGKLFRIRGKGVKSVQSRSRGDLLCRVVVETPVNLNEKQKYLLSELGNSFNGFRGDKNSPRSKRFFDGVKRFFDDLTK.

One can recognise a J domain in the interval 5-70 (DYYQILGIPK…EKRTAYDQYG (66 aa)). The CR-type zinc finger occupies 133–211 (GTTKEIRIPT…CRGQGRIKTN (79 aa)). Zn(2+)-binding residues include Cys146, Cys149, Cys163, Cys166, Cys185, Cys188, Cys199, and Cys202. CXXCXGXG motif repeat units lie at residues 146-153 (CKTCYGMG), 163-170 (CSTCHGKG), 185-192 (CPTCNGIG), and 199-206 (CRMCRGQG).

This sequence belongs to the DnaJ family. In terms of assembly, homodimer. It depends on Zn(2+) as a cofactor.

The protein resides in the cytoplasm. Participates actively in the response to hyperosmotic and heat shock by preventing the aggregation of stress-denatured proteins and by disaggregating proteins, also in an autonomous, DnaK-independent fashion. Unfolded proteins bind initially to DnaJ; upon interaction with the DnaJ-bound protein, DnaK hydrolyzes its bound ATP, resulting in the formation of a stable complex. GrpE releases ADP from DnaK; ATP binding to DnaK triggers the release of the substrate protein, thus completing the reaction cycle. Several rounds of ATP-dependent interactions between DnaJ, DnaK and GrpE are required for fully efficient folding. Also involved, together with DnaK and GrpE, in the DNA replication of plasmids through activation of initiation proteins. The polypeptide is Chaperone protein DnaJ (Buchnera aphidicola subsp. Schizaphis graminum (strain Sg)).